The chain runs to 406 residues: Cysteine desulfurase (406 aa).

K226 carries the N6-(pyridoxal phosphate)lysine modification. Residue C364 is the Cysteine persulfide intermediate of the active site.

It belongs to the class-V pyridoxal-phosphate-dependent aminotransferase family. Csd subfamily. In terms of assembly, homodimer. Interacts with SufE and the SufBCD complex composed of SufB, SufC and SufD. The interaction with SufE is required to mediate the direct transfer of the sulfur atom from the S-sulfanylcysteine. It depends on pyridoxal 5'-phosphate as a cofactor.

Its subcellular location is the cytoplasm. It catalyses the reaction (sulfur carrier)-H + L-cysteine = (sulfur carrier)-SH + L-alanine. The enzyme catalyses L-selenocysteine + AH2 = hydrogenselenide + L-alanine + A + H(+). Its pathway is cofactor biosynthesis; iron-sulfur cluster biosynthesis. Its function is as follows. Cysteine desulfurases mobilize the sulfur from L-cysteine to yield L-alanine, an essential step in sulfur metabolism for biosynthesis of a variety of sulfur-containing biomolecules. Component of the suf operon, which is activated and required under specific conditions such as oxidative stress and iron limitation. Acts as a potent selenocysteine lyase in vitro, that mobilizes selenium from L-selenocysteine. Selenocysteine lyase activity is however unsure in vivo. The sequence is that of Cysteine desulfurase from Salmonella heidelberg (strain SL476).